A 194-amino-acid polypeptide reads, in one-letter code: Potassium-transporting ATPase KdpC subunit (194 aa).

The chain crosses the membrane as a helical span at residues 12-34 (LFLLLLTGGVYPLLTTALGQWWF).

Belongs to the KdpC family. The system is composed of three essential subunits: KdpA, KdpB and KdpC.

It localises to the cell inner membrane. In terms of biological role, part of the high-affinity ATP-driven potassium transport (or Kdp) system, which catalyzes the hydrolysis of ATP coupled with the electrogenic transport of potassium into the cytoplasm. This subunit acts as a catalytic chaperone that increases the ATP-binding affinity of the ATP-hydrolyzing subunit KdpB by the formation of a transient KdpB/KdpC/ATP ternary complex. The polypeptide is Potassium-transporting ATPase KdpC subunit (Salmonella agona (strain SL483)).